The sequence spans 118 residues: Large ribosomal subunit protein uL24 (118 aa).

The protein belongs to the universal ribosomal protein uL24 family. Part of the 50S ribosomal subunit.

In terms of biological role, one of two assembly initiator proteins, it binds directly to the 5'-end of the 23S rRNA, where it nucleates assembly of the 50S subunit. One of the proteins that surrounds the polypeptide exit tunnel on the outside of the subunit. The polypeptide is Large ribosomal subunit protein uL24 (Prochlorococcus marinus (strain AS9601)).